The sequence spans 186 residues: Large ribosomal subunit protein eL18B (186 aa).

An N6,N6,N6-trimethyllysine modification is found at lysine 50. A Glycyl lysine isopeptide (Lys-Gly) (interchain with G-Cter in ubiquitin) cross-link involves residue lysine 116.

Belongs to the eukaryotic ribosomal protein eL18 family. As to quaternary structure, component of the large ribosomal subunit (LSU). Mature yeast ribosomes consist of a small (40S) and a large (60S) subunit. The 40S small subunit contains 1 molecule of ribosomal RNA (18S rRNA) and 33 different proteins (encoded by 57 genes). The large 60S subunit contains 3 rRNA molecules (25S, 5.8S and 5S rRNA) and 46 different proteins (encoded by 81 genes). eL18 interacts with NAP1.

The protein localises to the cytoplasm. Functionally, component of the ribosome, a large ribonucleoprotein complex responsible for the synthesis of proteins in the cell. The small ribosomal subunit (SSU) binds messenger RNAs (mRNAs) and translates the encoded message by selecting cognate aminoacyl-transfer RNA (tRNA) molecules. The large subunit (LSU) contains the ribosomal catalytic site termed the peptidyl transferase center (PTC), which catalyzes the formation of peptide bonds, thereby polymerizing the amino acids delivered by tRNAs into a polypeptide chain. The nascent polypeptides leave the ribosome through a tunnel in the LSU and interact with protein factors that function in enzymatic processing, targeting, and the membrane insertion of nascent chains at the exit of the ribosomal tunnel. This Saccharomyces cerevisiae (strain ATCC 204508 / S288c) (Baker's yeast) protein is Large ribosomal subunit protein eL18B.